Consider the following 124-residue polypeptide: uncharacterized protein (124 aa).

The tract at residues 82–124 (SDLGIEGGERAQGQNAHSVHGPGLQTERGGSQLQMVGHPLREL) is disordered.

This is an uncharacterized protein from Human cytomegalovirus (strain AD169) (HHV-5).